Here is a 530-residue protein sequence, read N- to C-terminus: tRNA-2-methylthio-N(6)-dimethylallyladenosine synthase (530 aa).

The region spanning 19–134 (RTYEVRTYGC…LPTLLERARH (116 aa)) is the MTTase N-terminal domain. Residues C28, C63, C97, C171, C175, and C178 each coordinate [4Fe-4S] cluster. Positions 157–387 (RDEIASGWVS…TALQERISHE (231 aa)) constitute a Radical SAM core domain. Residues 390–460 (QRVVGRTVEV…PFHLIADSVD (71 aa)) form the TRAM domain. A disordered region spans residues 509 to 530 (VPTTASTSAPVGDGSAHPRHRA).

The protein belongs to the methylthiotransferase family. MiaB subfamily. As to quaternary structure, monomer. Requires [4Fe-4S] cluster as cofactor.

It localises to the cytoplasm. The catalysed reaction is N(6)-dimethylallyladenosine(37) in tRNA + (sulfur carrier)-SH + AH2 + 2 S-adenosyl-L-methionine = 2-methylsulfanyl-N(6)-dimethylallyladenosine(37) in tRNA + (sulfur carrier)-H + 5'-deoxyadenosine + L-methionine + A + S-adenosyl-L-homocysteine + 2 H(+). Functionally, catalyzes the methylthiolation of N6-(dimethylallyl)adenosine (i(6)A), leading to the formation of 2-methylthio-N6-(dimethylallyl)adenosine (ms(2)i(6)A) at position 37 in tRNAs that read codons beginning with uridine. This chain is tRNA-2-methylthio-N(6)-dimethylallyladenosine synthase, found in Clavibacter sepedonicus (Clavibacter michiganensis subsp. sepedonicus).